Consider the following 55-residue polypeptide: ATP synthase F(0) complex subunit 8 (55 aa).

Residues 4–24 (LNPAPWFTILVFSWMIFLAII) form a helical membrane-spanning segment. The segment covering 32–41 (TSPNDSSPLS) has biased composition (polar residues). Residues 32–55 (TSPNDSSPLSTEKHKTESWDWPWQ) form a disordered region.

This sequence belongs to the ATPase protein 8 family. As to quaternary structure, component of the ATP synthase complex composed at least of ATP5F1A/subunit alpha, ATP5F1B/subunit beta, ATP5MC1/subunit c (homooctomer), MT-ATP6/subunit a, MT-ATP8/subunit 8, ATP5ME/subunit e, ATP5MF/subunit f, ATP5MG/subunit g, ATP5MK/subunit k, ATP5MJ/subunit j, ATP5F1C/subunit gamma, ATP5F1D/subunit delta, ATP5F1E/subunit epsilon, ATP5PF/subunit F6, ATP5PB/subunit b, ATP5PD/subunit d, ATP5PO/subunit OSCP. ATP synthase complex consists of a soluble F(1) head domain (subunits alpha(3) and beta(3)) - the catalytic core - and a membrane F(0) domain - the membrane proton channel (subunits c, a, 8, e, f, g, k and j). These two domains are linked by a central stalk (subunits gamma, delta, and epsilon) rotating inside the F1 region and a stationary peripheral stalk (subunits F6, b, d, and OSCP).

Its subcellular location is the mitochondrion membrane. Its function is as follows. Subunit 8, of the mitochondrial membrane ATP synthase complex (F(1)F(0) ATP synthase or Complex V) that produces ATP from ADP in the presence of a proton gradient across the membrane which is generated by electron transport complexes of the respiratory chain. ATP synthase complex consist of a soluble F(1) head domain - the catalytic core - and a membrane F(1) domain - the membrane proton channel. These two domains are linked by a central stalk rotating inside the F(1) region and a stationary peripheral stalk. During catalysis, ATP synthesis in the catalytic domain of F(1) is coupled via a rotary mechanism of the central stalk subunits to proton translocation. In vivo, can only synthesize ATP although its ATP hydrolase activity can be activated artificially in vitro. Part of the complex F(0) domain. This Formosania lacustris (Oriental stream loach) protein is ATP synthase F(0) complex subunit 8.